Consider the following 151-residue polypeptide: Leukocyte cell-derived chemotaxin-2 (151 aa).

The first 18 residues, 1-18 (MFSTKALLLAGLISTALA), serve as a signal peptide directing secretion. Disulfide bonds link Cys25-Cys60, Cys36-Cys41, and Cys99-Cys142. Zn(2+) contacts are provided by His53, Asp57, and His138.

It belongs to the LECT2/MIM-1 family. As to quaternary structure, interacts with MET. As to expression, highly expressed in adult and fetal liver and weakly in testis. Not expressed in bone marrow.

The protein localises to the cytoplasm. It is found in the secreted. In terms of biological role, has a neutrophil chemotactic activity. Also a positive regulator of chondrocyte proliferation. Does not show metalloendopeptidase activity. The sequence is that of Leukocyte cell-derived chemotaxin-2 (LECT2) from Homo sapiens (Human).